The chain runs to 421 residues: Gamma-glutamyl phosphate reductase (421 aa).

The protein belongs to the gamma-glutamyl phosphate reductase family.

It localises to the cytoplasm. The catalysed reaction is L-glutamate 5-semialdehyde + phosphate + NADP(+) = L-glutamyl 5-phosphate + NADPH + H(+). It participates in amino-acid biosynthesis; L-proline biosynthesis; L-glutamate 5-semialdehyde from L-glutamate: step 2/2. In terms of biological role, catalyzes the NADPH-dependent reduction of L-glutamate 5-phosphate into L-glutamate 5-semialdehyde and phosphate. The product spontaneously undergoes cyclization to form 1-pyrroline-5-carboxylate. The polypeptide is Gamma-glutamyl phosphate reductase (Leptospira biflexa serovar Patoc (strain Patoc 1 / ATCC 23582 / Paris)).